The following is a 1364-amino-acid chain: Pleckstrin homology domain-containing family H member 1 (1364 aa).

Positions 28–169 (FRLQASKIRE…VGSLQDALEA (142 aa)) form a coiled coil. Disordered regions lie at residues 184-266 (GAAE…SPPH), 296-321 (GTKTSAREGGPGSSLTLPKVRAPGTP), 356-395 (LHPSGLPELESRARSREEPEKMEMEEPPPAGKNEERESPK), 487-529 (PFMD…IKRG), and 546-568 (DACSLDSDYSEPEHKLQRTSSYS). A compositionally biased stretch (polar residues) spans 237 to 246 (EDSSSSTVHS). Residues 364 to 379 (LESRARSREEPEKMEM) show a composition bias toward basic and acidic residues. Polar residues predominate over residues 509–520 (VPSSESRKTSGL). 2 PH domains span residues 578-672 (SLEK…SLLK) and 687-796 (KPTV…VAAG). Serine 745 carries the post-translational modification Phosphoserine. The 155-residue stretch at 832–986 (YSKDGLYASL…PSRMEVVSIL (155 aa)) folds into the MyTH4 domain. Positions 997–1333 (FSIPVHFTNG…NHCTTTVNPP (337 aa)) constitute an FERM domain.

In Homo sapiens (Human), this protein is Pleckstrin homology domain-containing family H member 1 (PLEKHH1).